The chain runs to 208 residues: Ubiquitin-conjugating enzyme E2 S (208 aa).

Residues 14–160 (QTIRQVMKEL…ARMMTEIHAQ (147 aa)) enclose the UBC core domain. The active-site Glycyl thioester intermediate is C98. The segment at 161 to 193 (PAKCGAGASDAKDDDGPSTKKHAGLDKKLQDKK) is disordered. A compositionally biased stretch (basic and acidic residues) spans 170-193 (DAKDDDGPSTKKHAGLDKKLQDKK).

This sequence belongs to the ubiquitin-conjugating enzyme family.

It carries out the reaction S-ubiquitinyl-[E1 ubiquitin-activating enzyme]-L-cysteine + [E2 ubiquitin-conjugating enzyme]-L-cysteine = [E1 ubiquitin-activating enzyme]-L-cysteine + S-ubiquitinyl-[E2 ubiquitin-conjugating enzyme]-L-cysteine.. The protein operates within protein modification; protein ubiquitination. In terms of biological role, catalyzes the covalent attachment of ubiquitin to other proteins. Acts as an essential factor of the anaphase promoting complex/cyclosome (APC/C), a cell cycle-regulated ubiquitin ligase that controls progression through mitosis. Acts by specifically elongating polyubiquitin chains initiated by the E2 enzyme vih/UbcH10 on APC/C substrates, enhancing the degradation of APC/C substrates by the proteasome and promoting mitotic exit. The chain is Ubiquitin-conjugating enzyme E2 S from Drosophila virilis (Fruit fly).